The sequence spans 512 residues: Catalase (512 aa).

Residues His-60 and Asn-133 contribute to the active site. Tyr-344 contributes to the heme binding site. Ser-363 is subject to Phosphoserine. Positions Glu-488 to Pro-505 are enriched in basic and acidic residues. Residues Glu-488 to Ser-512 are disordered.

Belongs to the catalase family. Requires heme as cofactor.

Its subcellular location is the peroxisome matrix. It carries out the reaction 2 H2O2 = O2 + 2 H2O. Functionally, catalyzes the degradation of hydrogen peroxide (H(2)O(2)) generated by peroxisomal oxidases to water and oxygen, thereby protecting cells from the toxic effects of hydrogen peroxide. The sequence is that of Catalase (cta1) from Schizosaccharomyces pombe (strain 972 / ATCC 24843) (Fission yeast).